A 226-amino-acid polypeptide reads, in one-letter code: 1-hydroxy-2-glutathionyl-2-methyl-3-butene dehydrogenase (226 aa).

Belongs to the short-chain dehydrogenases/reductases (SDR) family.

It carries out the reaction 2-glutathionyl-2-methylbut-3-en-1-ol + 2 NAD(+) + H2O = 2-glutathionyl-2-methylbut-3-enoate + 2 NADH + 3 H(+). The catalysed reaction is 2-glutathionyl-2-methylbut-3-en-1-ol + NAD(+) = 2-glutathionyl-2-methylbut-3-enal + NADH + H(+). It catalyses the reaction 2-glutathionyl-2-methylbut-3-enal + NAD(+) + H2O = 2-glutathionyl-2-methylbut-3-enoate + NADH + 2 H(+). Its function is as follows. Involved in isoprene degradation. Catalyzes the two-step NAD(+)-dependent oxidation of 2-glutathionyl-2-methylbut-3-en-1-ol (HGMB) to 2-glutathionyl-2-methylbut-3-enoate (GMBA). This Rhodococcus sp. (strain AD45) protein is 1-hydroxy-2-glutathionyl-2-methyl-3-butene dehydrogenase.